Consider the following 249-residue polypeptide: BPI fold-containing family A member 1 (249 aa).

The first 15 residues, 1-15, serve as a signal peptide directing secretion; the sequence is MFQVAGLIVFCGLLA. Residues 81–86 form an important for surfactant activity and antibacterial properties region; the sequence is LLGGLL. Asn-151 carries N-linked (GlcNAc...) asparagine glycosylation. Cys-173 and Cys-217 form a disulfide bridge.

It belongs to the BPI/LBP/Plunc superfamily. Plunc family. Monomer. Interacts (via N-terminus) with SCNN1B, a subunit of the heterotrimeric epithelial sodium channel (ENaC); this inhibits proteolytic activation of ENaC. Expressed in lung and trachea.

Its subcellular location is the secreted. In terms of biological role, lipid-binding protein which shows high specificity for the surfactant phospholipid dipalmitoylphosphatidylcholine (DPPC). Plays a role in the innate immune responses of the upper airways. Reduces the surface tension in secretions from airway epithelia and inhibits the formation of biofilm by pathogenic Gram-negative bacteria, such as P.aeruginosa and K.pneumoniae. Negatively regulates proteolytic cleavage of SCNN1G, an event that is required for activation of the epithelial sodium channel (ENaC), and thereby contributes to airway surface liquid homeostasis and proper clearance of mucus. Plays a role in the airway inflammatory response after exposure to irritants. May attract macrophages and neutrophils. In Sus scrofa (Pig), this protein is BPI fold-containing family A member 1 (BPIFA1).